The chain runs to 360 residues: Magnesium-chelatase subunit ChlI (360 aa).

Gly-50–Ser-57 serves as a coordination point for ATP. Cys-285 and Cys-327 form a disulfide bridge.

It belongs to the Mg-chelatase subunits D/I family. In terms of assembly, the magnesium chelatase complex is a heterotrimer consisting of subunits CHLI, CHLD and CHLH.

It localises to the plastid. It is found in the chloroplast. It catalyses the reaction protoporphyrin IX + Mg(2+) + ATP + H2O = Mg-protoporphyrin IX + ADP + phosphate + 3 H(+). Its pathway is porphyrin-containing compound metabolism; chlorophyll biosynthesis. Redox regulation; active in reducing conditions, inactive in oxidizing conditions. Thioredoxins f and m mediate the reversible reductive activation of oxidized CHLI. In terms of biological role, involved in chlorophyll biosynthesis. Catalyzes the insertion of magnesium ion into protoporphyrin IX to yield Mg-protoporphyrin IX. The magnesium-chelatase is a complex of three subunits, CHLI, CHLD and CHLH. The reaction takes place in two steps, with an ATP-dependent activation followed by an ATP-dependent chelation step. In Mesostigma viride (Green alga), this protein is Magnesium-chelatase subunit ChlI (chlI).